Consider the following 124-residue polypeptide: Small ribosomal subunit protein uS12 (124 aa).

Residue Asp89 is modified to 3-methylthioaspartic acid.

Belongs to the universal ribosomal protein uS12 family. In terms of assembly, part of the 30S ribosomal subunit. Contacts proteins S8 and S17. May interact with IF1 in the 30S initiation complex.

Its function is as follows. With S4 and S5 plays an important role in translational accuracy. Interacts with and stabilizes bases of the 16S rRNA that are involved in tRNA selection in the A site and with the mRNA backbone. Located at the interface of the 30S and 50S subunits, it traverses the body of the 30S subunit contacting proteins on the other side and probably holding the rRNA structure together. The combined cluster of proteins S8, S12 and S17 appears to hold together the shoulder and platform of the 30S subunit. The protein is Small ribosomal subunit protein uS12 of Vibrio vulnificus (strain CMCP6).